The chain runs to 344 residues: MEQQKKNIKRYTEEEIEKAASLDIVDYCMQNDIPVKPDSERYYRLTEHDSLIIDRKKNQFYWNSRGVNGNIIKFVQEVEDASFPGAMQRLLDGEQDYEKASEITFVSEPYDYEHFEQKEVSRFDRAREYLIEERKIDPQVVDALHNKGLIKQDKYNNVLFLWKDRETGAVMGGSEQGVVKSDKYKRGAWKSIQKNSTANYGFNVLNGEPRNLKFYESDIDLLSYATLHKHNLKDTHLISMEGLKPQVIFNYYMKACERIGDVPDSLSLCVDNDKAGKAFVERLIHFRYEKNDGSIVAFKPEYPQAPSEEKKWDWNDECKRVAKQQEQREQGRRAAYLQQRGMER.

A compositionally biased stretch (basic and acidic residues) spans lysine 323–arginine 332. Residues lysine 323–arginine 344 are disordered.

This is an uncharacterized protein from Bacillus anthracis.